Here is a 167-residue protein sequence, read N- to C-terminus: Endoribonuclease YbeY (167 aa).

Histidine 131, histidine 135, and histidine 141 together coordinate Zn(2+).

It belongs to the endoribonuclease YbeY family. Requires Zn(2+) as cofactor.

It is found in the cytoplasm. Its function is as follows. Single strand-specific metallo-endoribonuclease involved in late-stage 70S ribosome quality control and in maturation of the 3' terminus of the 16S rRNA. The protein is Endoribonuclease YbeY of Rickettsia rickettsii (strain Sheila Smith).